Reading from the N-terminus, the 1351-residue chain is ABC transporter C family member 6 (1351 aa).

The ABC transmembrane type-1 1 domain occupies 112-397 (NKYALVSNLF…LPYDIFKAIG (286 aa)). 3 consecutive transmembrane segments (helical) span residues 120–140 (LFII…INYI), 149–169 (SILK…GQSI), and 248–268 (LLCY…VIAL). Positions 474–700 (NQDESINKKE…GIDFKSILKT (227 aa)) constitute an ABC transporter 1 domain. 510-517 (GVVGSGKT) serves as a coordination point for ATP. The stretch at 701–734 (KEIKKNVENETDSEELIKNEIEIENEIIDVNNAI) forms a coiled coil. The next 6 membrane-spanning stretches (helical) occupy residues 771-791 (GSSG…QAIF), 815-835 (IGYY…RILL), 904-924 (LISI…LSIA), 977-999 (MFDN…RWVS), 1002-1022 (LEVM…LFIS), and 1025-1045 (GLAA…SWGI). Residues 777–1060 (LFITISLFFV…LEVKMNSFQR (284 aa)) form the ABC transmembrane type-1 2 domain. The ABC transporter 2 domain maps to 1101–1336 (IEFKNVEIKY…PNSKFNKLIK (236 aa)). Residue 1135–1142 (GRTGAGKT) coordinates ATP.

Belongs to the ABC transporter superfamily. ABCC family. Conjugate transporter (TC 3.A.1.208) subfamily.

The protein localises to the membrane. The polypeptide is ABC transporter C family member 6 (abcC6) (Dictyostelium discoideum (Social amoeba)).